We begin with the raw amino-acid sequence, 103 residues long: Large ribosomal subunit protein uL24 (103 aa).

Belongs to the universal ribosomal protein uL24 family. In terms of assembly, part of the 50S ribosomal subunit.

In terms of biological role, one of two assembly initiator proteins, it binds directly to the 5'-end of the 23S rRNA, where it nucleates assembly of the 50S subunit. One of the proteins that surrounds the polypeptide exit tunnel on the outside of the subunit. The protein is Large ribosomal subunit protein uL24 of Listeria innocua serovar 6a (strain ATCC BAA-680 / CLIP 11262).